Consider the following 614-residue polypeptide: Putative ABC transporter ATP-binding protein MA_1747 (614 aa).

2 ABC transporter domains span residues 11-251 (VRLE…KLGI) and 319-552 (VLIE…AGLL). Residues 45–52 (GPSGCGKS) and 352–359 (GHNGAGKT) contribute to the ATP site.

The protein belongs to the ABC transporter superfamily.

The protein resides in the cell membrane. Probably part of an ABC transporter complex. Responsible for energy coupling to the transport system. This Methanosarcina acetivorans (strain ATCC 35395 / DSM 2834 / JCM 12185 / C2A) protein is Putative ABC transporter ATP-binding protein MA_1747.